The primary structure comprises 274 residues: Probable eukaryotic translation initiation factor 3 subunit J (274 aa).

Disordered regions lie at residues 1-110 and 207-245; these read MDSW…KEAM and KEQQEKTQSKRGAAAPAAKPVSTAAPSKKGGKPTVNVNS. Residues 38-47 show a composition bias toward acidic residues; that stretch reads DEEDEDEEEN. The segment covering 52–73 has biased composition (low complexity); sequence QNDSHSVSQKSSSSSQNDQGSN. Positions 82-110 are enriched in basic and acidic residues; sequence IQERNFEKAIKASEAAAKEESLESSKEAM. Over residues 219–234 the composition is skewed to low complexity; that stretch reads AAAPAAKPVSTAAPSK.

This sequence belongs to the eIF-3 subunit J family. Component of the eukaryotic translation initiation factor 3 (eIF-3) complex. The eIF-3 complex appears to include tif32/eif3a, SPAC25G10.08/eif3b, tif33/eif3c, SPBC4C3.07/eif3f, tif35/eif3g and sum1/eif3i. This set of common subunits may also associate exclusively with either moe1/eif3d and int6/eif3e, or with SPAC821.05/eif3h and SPAC1751.03/eif3m. The eIF-3 complex may also include SPAC3A12.13c/eif3j. Interacts with sad1.

The protein localises to the cytoplasm. Functionally, component of the eukaryotic translation initiation factor 3 (eIF-3) complex, which is involved in protein synthesis of a specialized repertoire of mRNAs and, together with other initiation factors, stimulates binding of mRNA and methionyl-tRNAi to the 40S ribosome. The eIF-3 complex specifically targets and initiates translation of a subset of mRNAs involved in cell proliferation. The protein is Probable eukaryotic translation initiation factor 3 subunit J of Schizosaccharomyces pombe (strain 972 / ATCC 24843) (Fission yeast).